Here is a 544-residue protein sequence, read N- to C-terminus: Probable protein kinase UbiB (544 aa).

Residues 123–500 enclose the Protein kinase domain; sequence DFDEKALASA…RNKQRKSQYL (378 aa). ATP is bound by residues 129–137 and lysine 152; that span reads LASASIAQV. Aspartate 286 (proton acceptor) is an active-site residue. A run of 2 helical transmembrane segments spans residues 499-519 and 522-542; these read YLLGIGATLILCGSLFFISAS and MAIAFMSAGALSWIIGWYKSG.

This sequence belongs to the ABC1 family. UbiB subfamily.

The protein localises to the cell inner membrane. Its pathway is cofactor biosynthesis; ubiquinone biosynthesis [regulation]. Is probably a protein kinase regulator of UbiI activity which is involved in aerobic coenzyme Q (ubiquinone) biosynthesis. Required for the expression of 2'-N-acetyltransferase. This is Probable protein kinase UbiB from Providencia stuartii.